A 267-amino-acid chain; its full sequence is Matrilysin (267 aa).

The first 20 residues, methionine 1–alanine 20, serve as a signal peptide directing secretion. A propeptide spans leucine 21–glutamate 97 (activation peptide). A Cysteine switch motif is present at residues proline 88–valine 95. Cysteine 90 lines the Zn(2+) pocket. Aspartate 156 is a Ca(2+) binding site. Zn(2+) contacts are provided by histidine 166 and aspartate 168. Ca(2+)-binding residues include aspartate 173, glycine 174, glycine 176, and threonine 178. Histidine 181 is a Zn(2+) binding site. Ca(2+) is bound by residues glycine 188, glycine 190, and aspartate 192. Histidine 194 serves as a coordination point for Zn(2+). Ca(2+) contacts are provided by aspartate 196 and glutamate 199. Histidine 217 contributes to the Zn(2+) binding site. The active site involves glutamate 218. Zn(2+) is bound by residues histidine 221 and histidine 227.

It belongs to the peptidase M10A family. Ca(2+) serves as cofactor. The cofactor is Zn(2+).

Its subcellular location is the secreted. The protein resides in the extracellular space. The protein localises to the extracellular matrix. It carries out the reaction Cleavage of 14-Ala-|-Leu-15 and 16-Tyr-|-Leu-17 in B chain of insulin. No action on collagen types I, II, IV, V. Cleaves gelatin chain alpha2(I) &gt; alpha1(I).. Degrades casein, gelatins of types I, III, IV, and V, and fibronectin. Activates procollagenase. The chain is Matrilysin (Mmp7) from Rattus norvegicus (Rat).